A 27-amino-acid chain; its full sequence is Caerulein precursor fragment R7 (27 aa).

Expressed by the skin glands.

The protein resides in the secreted. Antimicrobial peptide. This Xenopus ruwenzoriensis (Uganda clawed frog) protein is Caerulein precursor fragment R7.